Here is a 274-residue protein sequence, read N- to C-terminus: 5-deoxy-glucuronate isomerase (274 aa).

It belongs to the isomerase IolB family.

It carries out the reaction 5-deoxy-D-glucuronate = 5-dehydro-2-deoxy-D-gluconate. The protein operates within polyol metabolism; myo-inositol degradation into acetyl-CoA; acetyl-CoA from myo-inositol: step 4/7. In terms of biological role, involved in the isomerization of 5-deoxy-glucuronate (5DG) to 5-dehydro-2-deoxy-D-gluconate (DKG or 2-deoxy-5-keto-D-gluconate). The chain is 5-deoxy-glucuronate isomerase from Geobacillus thermodenitrificans (strain NG80-2).